Reading from the N-terminus, the 172-residue chain is Small ribosomal subunit protein uS4 (172 aa).

The S4 RNA-binding domain maps to 104-168; that stretch reads RRLQTIVYRK…SPLAKMAQGG (65 aa).

The protein belongs to the universal ribosomal protein uS4 family. Part of the 30S ribosomal subunit. Contacts protein S5. The interaction surface between S4 and S5 is involved in control of translational fidelity.

In terms of biological role, one of the primary rRNA binding proteins, it binds directly to 16S rRNA where it nucleates assembly of the body of the 30S subunit. Functionally, with S5 and S12 plays an important role in translational accuracy. The polypeptide is Small ribosomal subunit protein uS4 (Thermofilum pendens (strain DSM 2475 / Hrk 5)).